The following is a 343-amino-acid chain: MSNFNSSPVPTIFMSFFQMTKRVRLSDSFNPVYPYEDESTSQHPFINPGFISPNGFTQSPDGVLTLKCLTPLTTTGGSLQLKVGGGLTIDDTDGFLKENISAATPLVKTGHSIGLSLGPGLGTNENKLCAKLGEGLTFNSNNICIDDNINTLWTGVNPTTANCQIMASSESNDCKLILTLVKTGGLVTAFVYVIGVSNDFNMLTTHKNINFTAELFFDSTGNLLTSLSSLKTPLNHKSGQNMATGALTNAKGFMPSTTAYPFNVNSREKENYIYGTCYYTASDHTAFPIDISVMLNQRALNNETSYCIRVTWSWNTGVAPEVQTSATTLVTSPFTFYYIREDD.

This sequence belongs to the adenoviridae fiber family. In terms of assembly, homotrimer. Interacts with host receptor CD46. Interacts (via N-terminal tail region) with pentons.

Its subcellular location is the virion. The protein localises to the host nucleus. Its function is as follows. Forms spikes that protrude from each vertex of the icosahedral capsid. Interacts with host receptor CD46 to provide virion initial attachment to target cell. Fiber proteins are shed during virus entry, when virus is still at the cell surface. The polypeptide is Fiber protein (Homo sapiens (Human)).